The following is a 438-amino-acid chain: Serine--tRNA ligase (438 aa).

L-serine is bound at residue 245 to 247; it reads TSE. 276 to 278 contributes to the ATP binding site; sequence RSE. Glu-299 contacts L-serine. Residue 363–366 coordinates ATP; it reads EISS. Ser-398 lines the L-serine pocket.

Belongs to the class-II aminoacyl-tRNA synthetase family. Type-1 seryl-tRNA synthetase subfamily. In terms of assembly, homodimer. The tRNA molecule binds across the dimer.

It localises to the cytoplasm. The catalysed reaction is tRNA(Ser) + L-serine + ATP = L-seryl-tRNA(Ser) + AMP + diphosphate + H(+). It carries out the reaction tRNA(Sec) + L-serine + ATP = L-seryl-tRNA(Sec) + AMP + diphosphate + H(+). It functions in the pathway aminoacyl-tRNA biosynthesis; selenocysteinyl-tRNA(Sec) biosynthesis; L-seryl-tRNA(Sec) from L-serine and tRNA(Sec): step 1/1. Catalyzes the attachment of serine to tRNA(Ser). Is also able to aminoacylate tRNA(Sec) with serine, to form the misacylated tRNA L-seryl-tRNA(Sec), which will be further converted into selenocysteinyl-tRNA(Sec). This Verminephrobacter eiseniae (strain EF01-2) protein is Serine--tRNA ligase.